We begin with the raw amino-acid sequence, 249 residues long: Probable calcium-binding protein CML12 (249 aa).

Residues 1–24 are compositionally biased toward basic and acidic residues; it reads MQSQRERPREDRVHEETRGADHAH. Positions 1-80 are disordered; the sequence is MQSQRERPRE…RKGKAPATAE (80 aa). The span at 30–56 shows a compositional bias: low complexity; sequence AAAAASATATETATRTMSLHAGGVVVV. Residues 57–70 show a composition bias toward basic and acidic residues; sequence DGKEKGKKEEGEGK. EF-hand domains follow at residues 91-126, 128-163, 171-206, and 207-242; these read EQLRQLHEIFLRFDLDGDGSLTKLELAALLRSLGLR, AAGDEIHALIAAIDADGNGTVEFDELASSLADLILG, VDQAELAEAFRAFDRDGNGFISAAELARSMARMGHP, and ICYAELTDMMREADTDGDGLISFEEFTAIMAKSALD. Ca(2+) is bound by residues Asp-104, Asp-106, Asp-108, Ser-110, Glu-115, Asp-141, Asp-143, Asn-145, Thr-147, Glu-152, Asp-184, Asp-186, Asn-188, Glu-195, Asp-220, Asp-222, Asp-224, and Glu-231.

In terms of biological role, potential calcium sensor. The polypeptide is Probable calcium-binding protein CML12 (CML12) (Oryza sativa subsp. japonica (Rice)).